A 216-amino-acid chain; its full sequence is MLTIALPKGALLNESIQIFQKIGLDFSAFLDSKNRQLQITDPTNQAKALLVRATDVPVYVEYGQAQLGIAGYDVLLEKSPDVANLIDLKFGYCRMSVAVPADSPYQSPLDIPHHGKVASKFVNCAKDYFRRLDIPVEIIPLYGSVELGPITGMSEAIVDLVSTGRTLRENGLVEIDELFASSARLIAHPLSYRLDRDQIYNWVEKLREPTTSMAKV.

Belongs to the ATP phosphoribosyltransferase family. Short subfamily. Heteromultimer composed of HisG and HisZ subunits.

It localises to the cytoplasm. It catalyses the reaction 1-(5-phospho-beta-D-ribosyl)-ATP + diphosphate = 5-phospho-alpha-D-ribose 1-diphosphate + ATP. It functions in the pathway amino-acid biosynthesis; L-histidine biosynthesis; L-histidine from 5-phospho-alpha-D-ribose 1-diphosphate: step 1/9. Its function is as follows. Catalyzes the condensation of ATP and 5-phosphoribose 1-diphosphate to form N'-(5'-phosphoribosyl)-ATP (PR-ATP). Has a crucial role in the pathway because the rate of histidine biosynthesis seems to be controlled primarily by regulation of HisG enzymatic activity. The protein is ATP phosphoribosyltransferase of Microcystis aeruginosa (strain NIES-843 / IAM M-2473).